We begin with the raw amino-acid sequence, 561 residues long: MNSSLTAQRRGSDAELGPWVMAARSKDAAPSQRDGLLPVKVEEDSPGSWEPNYPAASPDPETSRLHFRQLRYQEVAGPEEALSRLRELCRRWLRPELLSKEQILELLVLEQFLTILPEELQAWVREHCPESGEEAVAVVRALQRALDGTSSQGMVTFEDTAVSLTWEEWERLDPARRDFCRESAQKDSGSTVPPSLESRVENKELIPMQQILEEAEPQGQLQEAFQGKRPLFSKCGSTHEDRVEKQSGDPLPLKLENSPEAEGLNSISDVNKNGSIEGEDSKNNELQNSARCSNLVLCQHIPKAERPTDSEEHGNKCKQSFHMVTWHVLKPHKSDSGDSFHHSSLFETQRQLHEERPYKCGNCGKSFKQRSDLFRHQRIHTGEKPYGCQECGKSFSQSAALTKHQRTHTGEKPYTCLKCGERFRQNSHLNRHQSTHSRDKHFKCEECGETCHISNLFRHQRLHKGERPYKCEECEKSFKQRSDLFKHHRIHTGEKPYGCSVCGKRFNQSATLIKHQRIHTGEKPYKCLECGERFRQSTHLIRHQRIHQNKVLSAGRGGSRL.

The segment at 1–61 is disordered; that stretch reads MNSSLTAQRR…NYPAASPDPE (61 aa). At Ser12 the chain carries Phosphoserine. Lys40 participates in a covalent cross-link: Glycyl lysine isopeptide (Lys-Gly) (interchain with G-Cter in SUMO2). The region spanning 64–146 is the SCAN box domain; that stretch reads RLHFRQLRYQ…AVVRALQRAL (83 aa). A KRAB domain is found at 155–230; it reads VTFEDTAVSL…LQEAFQGKRP (76 aa). Residues 182 to 201 are disordered; it reads ESAQKDSGSTVPPSLESRVE. Glycyl lysine isopeptide (Lys-Gly) (interchain with G-Cter in SUMO2) cross-links involve residues Lys203 and Lys228. Residues 231 to 285 are disordered; sequence LFSKCGSTHEDRVEKQSGDPLPLKLENSPEAEGLNSISDVNKNGSIEGEDSKNNE. Basic and acidic residues predominate over residues 237-247; it reads STHEDRVEKQS. Residue Lys254 forms a Glycyl lysine isopeptide (Lys-Gly) (interchain with G-Cter in SUMO2) linkage. Polar residues predominate over residues 265–274; it reads NSISDVNKNG. Lys282 participates in a covalent cross-link: Glycyl lysine isopeptide (Lys-Gly) (interchain with G-Cter in SUMO2). 7 C2H2-type zinc fingers span residues 358-380, 386-408, 414-436, 442-463, 469-491, 497-519, and 525-547; these read YKCGNCGKSFKQRSDLFRHQRIH, YGCQECGKSFSQSAALTKHQRTH, YTCLKCGERFRQNSHLNRHQSTH, FKCEECGETCHISNLFRHQRLH, YKCEECEKSFKQRSDLFKHHRIH, YGCSVCGKRFNQSATLIKHQRIH, and YKCLECGERFRQSTHLIRHQRIH. Lys443 is covalently cross-linked (Glycyl lysine isopeptide (Lys-Gly) (interchain with G-Cter in SUMO2)).

It belongs to the krueppel C2H2-type zinc-finger protein family.

It localises to the nucleus. Functionally, may be involved in transcriptional regulation. The protein is Zinc finger protein 394 (ZNF394) of Homo sapiens (Human).